The primary structure comprises 177 residues: Putative 3-methyladenine DNA glycosylase (177 aa).

It belongs to the DNA glycosylase MPG family.

The protein is Putative 3-methyladenine DNA glycosylase of Rickettsia felis (strain ATCC VR-1525 / URRWXCal2) (Rickettsia azadi).